The following is a 174-amino-acid chain: Ubiquinone biosynthesis accessory factor UbiT (174 aa).

The region spanning Leu45 to Asp133 is the SCP2 domain.

This sequence belongs to the UbiT family.

Its pathway is cofactor biosynthesis; ubiquinone biosynthesis. Functionally, required for O(2)-independent ubiquinone (coenzyme Q) biosynthesis. Likely functions as an accessory factor. The polypeptide is Ubiquinone biosynthesis accessory factor UbiT (Escherichia coli O157:H7).